A 130-amino-acid polypeptide reads, in one-letter code: Small ribosomal subunit protein uS9 (130 aa).

Residues aspartate 107–arginine 130 are disordered. The segment covering valine 111–arginine 130 has biased composition (basic residues).

This sequence belongs to the universal ribosomal protein uS9 family.

The sequence is that of Small ribosomal subunit protein uS9 from Streptococcus sanguinis (strain SK36).